A 224-amino-acid polypeptide reads, in one-letter code: PKHD-type hydroxylase Tgr7_2199 (224 aa).

Positions 78–176 (KLSGAFFARY…RLVAVAWAES (99 aa)) constitute a Fe2OG dioxygenase domain. Fe cation contacts are provided by H96, D98, and H157. Residue R167 coordinates 2-oxoglutarate.

It depends on Fe(2+) as a cofactor. Requires L-ascorbate as cofactor.

This Thioalkalivibrio sulfidiphilus (strain HL-EbGR7) protein is PKHD-type hydroxylase Tgr7_2199.